Reading from the N-terminus, the 314-residue chain is ATP synthase gamma chain (314 aa).

The protein belongs to the ATPase gamma chain family. As to quaternary structure, F-type ATPases have 2 components, CF(1) - the catalytic core - and CF(0) - the membrane proton channel. CF(1) has five subunits: alpha(3), beta(3), gamma(1), delta(1), epsilon(1). CF(0) has three main subunits: a, b and c.

The protein localises to the cell inner membrane. Functionally, produces ATP from ADP in the presence of a proton gradient across the membrane. The gamma chain is believed to be important in regulating ATPase activity and the flow of protons through the CF(0) complex. This is ATP synthase gamma chain from Gloeobacter violaceus (strain ATCC 29082 / PCC 7421).